The primary structure comprises 581 residues: FAD-dependent monooxygenase DEP4 (581 aa).

Residue Val43–Lys46 coordinates FAD. An NADP(+)-binding site is contributed by Phe54–Gln56. Val108 serves as a coordination point for FAD. Residues Val183–Arg202, Ala219–Pro220, and Asp351–Ile352 each bind NADP(+). Residue Met470 coordinates FAD.

The protein belongs to the FAD-binding monooxygenase family. It depends on FAD as a cofactor.

Its pathway is polyketide biosynthesis. Its function is as follows. FAD-dependent monooxygenase; part of the gene cluster that mediates the biosynthesis of depudecin, a highly oxidized eleven-carbon linear polyketide that acts as a histone deacetylase (HDAC) inhibitor and makes a small contribution to pathogenesis. The reducing polyketide synthase DEP5 is the central enzyme in depudecin biosynthesis by yielding the backbone polyketide chain. The monooxygenases DEP2 and DEP4, as well as the uncharacterized protein DEP1, then act as tailoring enzymes to modify the intermediate polyketide chain into depudecin. This is FAD-dependent monooxygenase DEP4 from Alternaria brassicicola (Dark leaf spot agent).